A 1297-amino-acid chain; its full sequence is Probable bifunctional E2/E3 enzyme R795 (1297 aa).

The RING-type; atypical zinc-finger motif lies at 74–128 (CAICRYQENEPCIEHKSSESNTKCPIAQSVSCSHSFHACCISRWLHTKKTCPLCN). The 73-residue stretch at 678–750 (EPLQEFLCPI…RDWKENNTVI (73 aa)) folds into the U-box domain. Residues 899–1082 (EMTLEIHSSN…LDIMELETMI (184 aa)) form the VWFA domain. A UBC core domain is found at 1133 to 1279 (QKLIRVQREI…IIDYVNKFAL (147 aa)). The Glycyl thioester intermediate role is filled by Cys1217.

The protein in the C-terminal section; belongs to the ubiquitin-conjugating enzyme family.

The enzyme catalyses S-ubiquitinyl-[E2 ubiquitin-conjugating enzyme]-L-cysteine + [acceptor protein]-L-lysine = [E2 ubiquitin-conjugating enzyme]-L-cysteine + N(6)-ubiquitinyl-[acceptor protein]-L-lysine.. It catalyses the reaction S-ubiquitinyl-[E1 ubiquitin-activating enzyme]-L-cysteine + [E2 ubiquitin-conjugating enzyme]-L-cysteine = [E1 ubiquitin-activating enzyme]-L-cysteine + S-ubiquitinyl-[E2 ubiquitin-conjugating enzyme]-L-cysteine.. Its pathway is protein modification; protein ubiquitination. Functionally, catalyzes the covalent attachment of ubiquitin to other proteins. Also acts as an E3 ubiquitin-protein ligase. This is Probable bifunctional E2/E3 enzyme R795 from Acanthamoeba polyphaga (Amoeba).